The primary structure comprises 172 residues: Inorganic pyrophosphatase (172 aa).

Lys-29, Arg-43, and Tyr-55 together coordinate substrate. The Mg(2+) site is built by Asp-65, Asp-70, and Asp-102. A substrate-binding site is contributed by Tyr-141.

It belongs to the PPase family. Homohexamer. Requires Mg(2+) as cofactor.

The protein resides in the cytoplasm. It carries out the reaction diphosphate + H2O = 2 phosphate + H(+). Catalyzes the hydrolysis of inorganic pyrophosphate (PPi) forming two phosphate ions. The polypeptide is Inorganic pyrophosphatase (Rickettsia prowazekii (strain Madrid E)).